Here is a 247-residue protein sequence, read N- to C-terminus: Ribosomal RNA large subunit methyltransferase E (247 aa).

Residues 1–21 (MKKTTKKTAGGYGGSGSHKLY) form a disordered region. Positions 88, 90, 111, 127, and 151 each coordinate S-adenosyl-L-methionine. K191 acts as the Proton acceptor in catalysis.

This sequence belongs to the class I-like SAM-binding methyltransferase superfamily. RNA methyltransferase RlmE family.

It is found in the cytoplasm. The enzyme catalyses uridine(2552) in 23S rRNA + S-adenosyl-L-methionine = 2'-O-methyluridine(2552) in 23S rRNA + S-adenosyl-L-homocysteine + H(+). Functionally, specifically methylates the uridine in position 2552 of 23S rRNA at the 2'-O position of the ribose in the fully assembled 50S ribosomal subunit. This is Ribosomal RNA large subunit methyltransferase E from Bartonella henselae (strain ATCC 49882 / DSM 28221 / CCUG 30454 / Houston 1) (Rochalimaea henselae).